The chain runs to 566 residues: MKQSMVFSPTLREVPADAEIKSHQLLLRAGFMRQNASGIYSFLPFGLKVLHKVERIVREEMERAGAVELLMPAMQAAELWQESGRWYSYGSELMRMKDRNAREFALGATHEEVITDLVRDEVKSYKKLPLTLYQIQTKFRDEQRPRFGLLRGREFLMKDAYSFHATQESLDEVYDRLYKAYSNIFARCGLNFRAVIADSGAMGGKDTHEFMVLSDVGEDTIAYSDTSDYAANIEMAPVVATYTKSDEAEKELEKVATPDQKAIEEVSAFLNIEADKCIKSMVFKVDEKLVVVLVRGDHEVNDVKVKNVYGASVVELASHEEIKELLNCEVGSLGPIGVNGDIEIIADHAVASIVNGCSGANEEGFHYVNVNPERDFKVSQYTDLRFIQEGDQSPDGNGTILFARGIEVGHVFKLGTRYSEAMNATFLDENGKTQPLIMGCYGIGVSRTVAAIAEQFNDENGLVWPKAVAPFHVHVIPVNMKSDAQREMGENIYNSLQEQGYEVLLDDRAERAGVKFADADLFGLPVRVTVGKKADEGIVEVKVRATGESEEVKVEELQTYIANILK.

The protein belongs to the class-II aminoacyl-tRNA synthetase family. ProS type 1 subfamily. In terms of assembly, homodimer.

It is found in the cytoplasm. It catalyses the reaction tRNA(Pro) + L-proline + ATP = L-prolyl-tRNA(Pro) + AMP + diphosphate. Its function is as follows. Catalyzes the attachment of proline to tRNA(Pro) in a two-step reaction: proline is first activated by ATP to form Pro-AMP and then transferred to the acceptor end of tRNA(Pro). As ProRS can inadvertently accommodate and process non-cognate amino acids such as alanine and cysteine, to avoid such errors it has two additional distinct editing activities against alanine. One activity is designated as 'pretransfer' editing and involves the tRNA(Pro)-independent hydrolysis of activated Ala-AMP. The other activity is designated 'posttransfer' editing and involves deacylation of mischarged Ala-tRNA(Pro). The misacylated Cys-tRNA(Pro) is not edited by ProRS. This is Proline--tRNA ligase 1 from Bacillus thuringiensis subsp. konkukian (strain 97-27).